Consider the following 232-residue polypeptide: 5'-methylthioadenosine/S-adenosylhomocysteine nucleosidase (232 aa).

The Proton acceptor role is filled by Glu12. Substrate contacts are provided by residues Gly78, Ile152, and 173-174 (ME). The active-site Proton donor is Asp197.

This sequence belongs to the PNP/UDP phosphorylase family. MtnN subfamily. As to quaternary structure, homodimer.

The catalysed reaction is S-adenosyl-L-homocysteine + H2O = S-(5-deoxy-D-ribos-5-yl)-L-homocysteine + adenine. It catalyses the reaction S-methyl-5'-thioadenosine + H2O = 5-(methylsulfanyl)-D-ribose + adenine. The enzyme catalyses 5'-deoxyadenosine + H2O = 5-deoxy-D-ribose + adenine. Its pathway is amino-acid biosynthesis; L-methionine biosynthesis via salvage pathway; S-methyl-5-thio-alpha-D-ribose 1-phosphate from S-methyl-5'-thioadenosine (hydrolase route): step 1/2. In terms of biological role, catalyzes the irreversible cleavage of the glycosidic bond in both 5'-methylthioadenosine (MTA) and S-adenosylhomocysteine (SAH/AdoHcy) to adenine and the corresponding thioribose, 5'-methylthioribose and S-ribosylhomocysteine, respectively. Also cleaves 5'-deoxyadenosine, a toxic by-product of radical S-adenosylmethionine (SAM) enzymes, into 5-deoxyribose and adenine. Thus, is required for in vivo function of the radical SAM enzymes biotin synthase and lipoic acid synthase, that are inhibited by 5'-deoxyadenosine accumulation. In Escherichia coli O7:K1 (strain IAI39 / ExPEC), this protein is 5'-methylthioadenosine/S-adenosylhomocysteine nucleosidase.